The following is a 59-amino-acid chain: Salivary thrombin inhibitor XC-43 (59 aa).

A signal peptide spans methionine 1 to alanine 23.

In terms of assembly, interacts with human F2 (thrombin). In terms of tissue distribution, salivary gland (at protein level).

It is found in the secreted. Anticoagulant protein that acts as a competitive inhibitor of host thrombin. Inhibits thrombin-mediated host platelet aggregation. The sequence is that of Salivary thrombin inhibitor XC-43 from Xenopsylla cheopis (Oriental rat flea).